Reading from the N-terminus, the 399-residue chain is Centrosomal protein 43 (399 aa).

Positions Asp70 to Gln102 constitute a LisH domain. 2 disordered regions span residues Pro142–Ser216 and Asp236–Ser311. Phosphoserine occurs at positions 152 and 160. Residues Gly163 to Ser172 show a composition bias toward polar residues. Position 170 is a phosphothreonine (Thr170). Positions Pro175 to Ile186 are enriched in basic residues. The segment covering Ser197 to Ser216 has biased composition (low complexity). Ser202 carries the post-translational modification Phosphoserine. Residues Asp246–Phe256 show a composition bias toward acidic residues. Residues Pro259 to Lys275 show a composition bias toward basic and acidic residues. The segment covering Arg290–Leu302 has biased composition (low complexity). 2 positions are modified to phosphoserine: Ser301 and Ser326. The disordered stretch occupies residues Gly328 to Ser354. Tyr337 is modified (phosphotyrosine).

This sequence belongs to the CEP43 family. Homodimer. Part of a ternary complex that contains CEP350, CEP43 and MAPRE1. Interacts directly with CEP350 and MAPRE1. Interacts with CEP19. Interacts (via N-terminus) with CEP350 (via C-terminus).

It is found in the cytoplasm. Its subcellular location is the cytoskeleton. It localises to the microtubule organizing center. The protein localises to the centrosome. The protein resides in the centriole. It is found in the cilium basal body. Its function is as follows. Required for anchoring microtubules to the centrosomes. Required for ciliation. In Mus musculus (Mouse), this protein is Centrosomal protein 43.